The sequence spans 175 residues: Shikimate kinase (175 aa).

14 to 19 (GAGKST) lines the ATP pocket. Mg(2+) is bound at residue S18. Positions 36, 60, and 82 each coordinate substrate. R120 contributes to the ATP binding site. R140 is a binding site for substrate. Q157 contacts ATP.

The protein belongs to the shikimate kinase family. Monomer. The cofactor is Mg(2+).

It localises to the cytoplasm. The catalysed reaction is shikimate + ATP = 3-phosphoshikimate + ADP + H(+). The protein operates within metabolic intermediate biosynthesis; chorismate biosynthesis; chorismate from D-erythrose 4-phosphate and phosphoenolpyruvate: step 5/7. Its function is as follows. Catalyzes the specific phosphorylation of the 3-hydroxyl group of shikimic acid using ATP as a cosubstrate. The polypeptide is Shikimate kinase (Pasteurella multocida (strain Pm70)).